The chain runs to 185 residues: Pro-adrenomedullin (185 aa).

The signal sequence occupies residues 1–21; it reads MKLVSVALMYLGSLAFLGADT. R41 is subject to Arginine amide. Positions 45–92 are excised as a propeptide; it reads ELRMSSSYPTGLADVKAGPAQTLIRPQDMKGASRSPEDSSPDAARIRV. The tract at residues 60-87 is disordered; the sequence is KAGPAQTLIRPQDMKGASRSPEDSSPDA. Residues C110 and C115 are joined by a disulfide bond. Residues 133-185 are disordered; the sequence is DNVAPRSKISPQGYGRRRRRSLPEAGPGRTLVSSKPQAHGAPAPPSGSAPHFL. Y146 is subject to Tyrosine amide. The propeptide at 148-185 is preproAM C-terminal fragment; sequence RRRRRSLPEAGPGRTLVSSKPQAHGAPAPPSGSAPHFL.

Belongs to the adrenomedullin family. As to expression, highest levels found in pheochromocytoma and adrenal medulla. Also found in lung, ventricle and kidney tissues.

It localises to the secreted. In terms of biological role, adrenomedullin/ADM and proadrenomedullin N-20 terminal peptide/PAMP are peptide hormones that act as potent hypotensive and vasodilatator agents. Numerous actions have been reported most related to the physiologic control of fluid and electrolyte homeostasis. In the kidney, ADM is diuretic and natriuretic, and both ADM and PAMP inhibit aldosterone secretion by direct adrenal actions. In pituitary gland, both peptides at physiologically relevant doses inhibit basal ACTH secretion. Both peptides appear to act in brain and pituitary gland to facilitate the loss of plasma volume, actions which complement their hypotensive effects in blood vessels. Functionally, ADM function is mediated by the CALCRL-RAMP2 and CALCRL-RAMP3 receptor complexes with ADM showing the highest potency for the CALCRL-RAMP2 complex. This Homo sapiens (Human) protein is Pro-adrenomedullin.